Reading from the N-terminus, the 234-residue chain is Phosphoglycolate phosphatase (234 aa).

D8 (nucleophile) is an active-site residue. Positions 8 and 10 each coordinate Mg(2+). K157 contacts substrate. Mg(2+) contacts are provided by D180 and D184.

Belongs to the archaeal SPP-like hydrolase family. Mg(2+) is required as a cofactor.

It carries out the reaction 2-phosphoglycolate + H2O = glycolate + phosphate. Its function is as follows. Catalyzes the dephosphorylation of 2-phosphoglycolate. This Methanoculleus marisnigri (strain ATCC 35101 / DSM 1498 / JR1) protein is Phosphoglycolate phosphatase.